Here is a 480-residue protein sequence, read N- to C-terminus: MAENIGTVIQVSGPAVDVQFPEATMPGIYQALRVVSDGFDVPTPINVILEVQQHLGEGRVRCVAMEATDGMVRGMKAIDLGGPISVPVGRETLGRVLNVIGEPVDNMGPVQAKVHMPIHRQAPAFDEQATGEEMFETGVKVIDLIQPFLKGGKIGLFGGAGVGKTVVIQELINNVASKHGGFSVFAGVGERTREGNDLWLEFQEAGVIDIHDFSKSKAALIYGQMTEPPGARLRVALTGLTVAEYFRDQEGADTLLFIDNIFRFTQAGSEVSTLLGRMPSAVGYQPNLATEMGELQERITSTKKGSVTSVQAVYVPADDMTDPAPATTFAHLDATTVLSRPLSELGIYPAVDPLASTSRILTPAVVGQEHYDVAQGVKRILQRYKDLQDIIAILGIDELSEEDRLTVSRARKVQKFLSQPFHVAEQFTGIPGRYCKIADTVRSFKEVIEGKHDSVPEQAFYMKGTIEEVLEEAEKMQAAK.

158 to 165 (GGAGVGKT) serves as a coordination point for ATP.

This sequence belongs to the ATPase alpha/beta chains family. In terms of assembly, F-type ATPases have 2 components, CF(1) - the catalytic core - and CF(0) - the membrane proton channel. CF(1) has five subunits: alpha(3), beta(3), gamma(1), delta(1), epsilon(1). CF(0) has three main subunits: a(1), b(2) and c(9-12). The alpha and beta chains form an alternating ring which encloses part of the gamma chain. CF(1) is attached to CF(0) by a central stalk formed by the gamma and epsilon chains, while a peripheral stalk is formed by the delta and b chains.

Its subcellular location is the cell inner membrane. The enzyme catalyses ATP + H2O + 4 H(+)(in) = ADP + phosphate + 5 H(+)(out). Produces ATP from ADP in the presence of a proton gradient across the membrane. The catalytic sites are hosted primarily by the beta subunits. This is ATP synthase subunit beta from Acidobacterium capsulatum (strain ATCC 51196 / DSM 11244 / BCRC 80197 / JCM 7670 / NBRC 15755 / NCIMB 13165 / 161).